Reading from the N-terminus, the 539-residue chain is GMP synthase [glutamine-hydrolyzing] (539 aa).

Residues 4–202 (KILILDFGSQ…VLQIAGAKPD (199 aa)) enclose the Glutamine amidotransferase type-1 domain. Residue Cys81 is the Nucleophile of the active site. Active-site residues include His176 and Glu178. One can recognise a GMPS ATP-PPase domain in the interval 203 to 395 (WIMSNHIEEA…LGLPPEMVYR (193 aa)). 230 to 236 (SGGVDSS) contacts ATP.

As to quaternary structure, homodimer.

It carries out the reaction XMP + L-glutamine + ATP + H2O = GMP + L-glutamate + AMP + diphosphate + 2 H(+). Its pathway is purine metabolism; GMP biosynthesis; GMP from XMP (L-Gln route): step 1/1. Functionally, catalyzes the synthesis of GMP from XMP. This chain is GMP synthase [glutamine-hydrolyzing], found in Burkholderia ambifaria (strain MC40-6).